Consider the following 326-residue polypeptide: MATH domain and coiled-coil domain-containing protein At3g58370 (326 aa).

The MATH domain occupies 7-133 (DNKFTWVIKN…NGEVKIVVEI (127 aa)). A coiled-coil region spans residues 259 to 312 (LRLDWLEKKLAEVKAKKKKVETGKARLQRAEEELQKLNQKCLELKAFLEKENAD).

This Arabidopsis thaliana (Mouse-ear cress) protein is MATH domain and coiled-coil domain-containing protein At3g58370.